The sequence spans 627 residues: Neuronal acetylcholine receptor subunit alpha-4 (627 aa).

The N-terminal stretch at 1–28 is a signal peptide; sequence MELGGPGAPRLLPPLLLLLGTGLLRASS. The Extracellular portion of the chain corresponds to 29-242; the sequence is HVETRAHAEE…ITYAFVIRRL (214 aa). N57 carries N-linked (GlcNAc...) asparagine glycosylation. 2 residues coordinate Ca(2+): V76 and E78. Residues N107 and N174 are each glycosylated (N-linked (GlcNAc...) asparagine). 2 cysteine pairs are disulfide-bonded: C161/C175 and C225/C226. A helical transmembrane segment spans residues 243 to 267; it reads PLFYTINLIIPCLLISCLTVLVFYL. C271 carries the S-palmitoyl cysteine lipid modification. 2 consecutive transmembrane segments (helical) span residues 275–293 and 309–330; these read ITLCISVLLSLTVFLLLIT and YLLFTMIFVTLSIVITVFVLNV. Over 331–600 the chain is Cytoplasmic; it reads HHRSPRTHTM…WKYVAMVIDR (270 aa). Disordered stretches follow at residues 382–479 and 497–559; these read PRFW…EAVE and DATS…RHLP. Phosphoserine occurs at positions 424, 538, and 541. A helical transmembrane segment spans residues 601–619; that stretch reads IFLWMFIIVCLLGTVGLFL.

The protein belongs to the ligand-gated ion channel (TC 1.A.9) family. Acetylcholine receptor (TC 1.A.9.1) subfamily. Alpha-4/CHRNA4 sub-subfamily. In terms of assembly, neuronal AChR is composed of two different types of subunits: alpha and beta. CHRNA4 forms heteropentameric neuronal acetylcholine receptors with CHRNB2 and CHRNB4, as well as CHRNA5 and CHRNB3 as accesory subunits. Found in two major stoichiometric forms, LS (low agonist sensitivity): (CHRNA4)3:(CHRNB2)2 and HS (high agonist sensitivity): (CHRNA4)2:(CHRNB2)3, the two stoichiometric forms differ in their unitary conductance, calcium permeability, ACh sensitivity and potentiation by divalent cation. Cells produce predominantly an (CHRNA4)3:(CHRNB2)2 nAChR. The (CHRNA4)2:(CHRNB2)3 expression is selectively up-regulated by nicotine and has lower single channel conductance and calcium permeability. In the striatum, also forms CHRNA4:CHRNA6:CHRNB2 complexes. Also found in the stoichiometric form: (CHRNA4:CHRNB2)2:CHRNB3. Interacts with RIC3; which is required for proper folding and assembly. Interacts with LYPD6.

The protein localises to the synaptic cell membrane. Its subcellular location is the cell membrane. The catalysed reaction is Ca(2+)(in) = Ca(2+)(out). It carries out the reaction K(+)(in) = K(+)(out). The enzyme catalyses Na(+)(in) = Na(+)(out). Activated by a myriad of ligands such as acetylcholine, cytisine, nicotine, choline and epibatidine. Channel potentiation by calcium is stoichiometry-selective, CHRNA4:CHRNB2 nACh receptor is achieved by calcium association with topographically distinct sites framed by anionic residues within the CHRNA4 subunit and between the CHRNA4 and CHRNB2 subunits. nAChR activity is inhibited by the antagonist alpha-conotoxins BuIA, PnIA, GID and MII, small disulfide-constrained peptides from cone snails. In terms of biological role, component of neuronal acetylcholine receptors (nAChRs) that function as pentameric, ligand-gated cation channels with high calcium permeability among other activities. nAChRs are excitatory neurotrasnmitter receptors formed by a collection of nAChR subunits known to mediate synaptic transmission in the nervous system and the neuromuscular junction. Each nAchR subunit confers differential attributes to channel properties, including activation, deactivation and desensitization kinetics, pH sensitivity, cation permeability, and binding to allosteric modulators. CHRNA4 forms heteropentameric neuronal acetylcholine receptors with CHRNB2 and CHRNB4, as well as CHRNA5 and CHRNB3 as accesory subunits. Is the most abundant nAChR subtype expressed in the central nervous system. Found in two major stoichiometric forms,(CHRNA4)3:(CHRNB2)2 and (CHRNA4)2:(CHRNB2)3, the two stoichiometric forms differ in their unitary conductance, calcium permeability, ACh sensitivity and potentiation by divalent cation. Involved in the modulation of calcium-dependent signaling pathways, influences the release of neurotransmitters, including dopamine, glutamate and GABA. The sequence is that of Neuronal acetylcholine receptor subunit alpha-4 (CHRNA4) from Pan troglodytes (Chimpanzee).